Reading from the N-terminus, the 397-residue chain is Phosphoglycerate kinase (397 aa).

Residues 21-23, Arg36, 59-62, Arg114, and Arg147 each bind substrate; these read DMN and HLGR. ATP is bound by residues Lys198, Glu320, and 346–349; that span reads GGDT.

Belongs to the phosphoglycerate kinase family. In terms of assembly, monomer.

Its subcellular location is the cytoplasm. It catalyses the reaction (2R)-3-phosphoglycerate + ATP = (2R)-3-phospho-glyceroyl phosphate + ADP. The protein operates within carbohydrate degradation; glycolysis; pyruvate from D-glyceraldehyde 3-phosphate: step 2/5. This chain is Phosphoglycerate kinase, found in Neisseria gonorrhoeae (strain NCCP11945).